The primary structure comprises 639 residues: MSQIADKDVAEKPDADDSHKNKGLYAAILGSIGVVYGDIGTSPLYAFREALKPIAYDGVTREEVIGLTSLMIWSLTIIVTFKYITLLLRADNDGEGGTLSLLALLMKTAGTHRSVLIVLGLIGAALFLGDAMITPALSVLSAVEGLKLVTPAMDDFIIPISVCILIGLFAIQSHGTGTVAKFFGPITAVWFLVMGGAGLIHIADDFGILFAFNPWHAVEFLANEGFYGVVVLGAVFLTITGAEALYADLGHFGRRPIQWAWFCLVFPALTLNYLGQGALVLKDPAAMSNPFYLMFPQWAILPAVILATAATIIASQAVITGAFSLVRQAIHLGYLPRMEILFTSETNTGQIYLPAVNTILLFGVVALVLTFKSSDALATAYGISVTGAMVVTSLMFFEFVRKRWQWSIWLALAVLTPLLLLELIFLGANLLKIHDGGYVPVLLAIAFTVIMTTWQRGSRILFAKTRRGDVPLKAFVASVEKESAHAPVRVPGTAIFLTGDPEAAPAALLHNLKHNHVLHDKNVILTIRTEDQPRVRPEDRYTLTKLSDRFAVVELHFGFMETQNVTQALGYLRRTGYKFDIMSTSFYLGRRKLVPDPKSGMPGWQNRLFIALAETAADPSDYFRLPANRVVELGSHVVV.

Helical transmembrane passes span 27 to 47, 64 to 84, 115 to 135, 151 to 171, 182 to 202, 225 to 245, 261 to 281, 293 to 313, 351 to 371, 377 to 397, 408 to 428, and 430 to 450; these read AILG…LYAF, VIGL…FKYI, VLIV…MITP, PAMD…LFAI, FFGP…LIHI, GFYG…AEAL, WFCL…ALVL, LMFP…ATII, IYLP…VLTF, LATA…LMFF, IWLA…FLGA, and LLKI…FTVI.

Belongs to the HAK/KUP transporter (TC 2.A.72) family.

The protein localises to the cell inner membrane. It carries out the reaction K(+)(in) + H(+)(in) = K(+)(out) + H(+)(out). Its function is as follows. Transport of potassium into the cell. Likely operates as a K(+):H(+) symporter. The chain is Probable potassium transport system protein Kup 1 from Agrobacterium fabrum (strain C58 / ATCC 33970) (Agrobacterium tumefaciens (strain C58)).